The sequence spans 272 residues: 5'-nucleotidase SurE (272 aa).

A divalent metal cation is bound by residues aspartate 28, aspartate 29, serine 59, and asparagine 115.

Belongs to the SurE nucleotidase family. A divalent metal cation serves as cofactor.

The protein resides in the cytoplasm. The catalysed reaction is a ribonucleoside 5'-phosphate + H2O = a ribonucleoside + phosphate. Nucleotidase that shows phosphatase activity on nucleoside 5'-monophosphates. This is 5'-nucleotidase SurE from Chlorobium chlorochromatii (strain CaD3).